A 1440-amino-acid polypeptide reads, in one-letter code: ABC transporter G family member 46 (1440 aa).

The disordered stretch occupies residues 1–42 (MDDDVDAGEIYAVDRQREEGSASAAAFSRSPSTGRVDDDDDD). The segment covering 21–32 (SASAAAFSRSPS) has biased composition (low complexity). The 283-residue stretch at 137 to 419 (ANTLHMTTRS…FKSLGFKCLE (283 aa)) folds into the ABC transporter 1 domain. An ATP-binding site is contributed by 170–177 (GSPGSGKT). Positions 497–710 (KILKANIDRE…ALNALAVNEF (214 aa)) constitute an ABC transmembrane type-2 1 domain. The next 7 membrane-spanning stretches (helical) occupy residues 516 to 536 (LYIF…SVFI), 561 to 581 (AIMF…PVFF), 603 to 623 (TPIS…VIGF), 634 to 654 (FLVL…IAAL), 659 to 679 (VVAS…SGFI), 688 to 708 (WLIW…LAVN), and 745 to 765 (IGLG…TICL). The tract at residues 794–829 (DQEPSSGGRVTNDKRYTEGGNNDEATSSNANHNSSP) is disordered. Residues 812-829 (GGNNDEATSSNANHNSSP) show a composition bias toward polar residues. Positions 843 to 1095 (MTFEDIRYSI…ELIKYFESIE (253 aa)) constitute an ABC transporter 2 domain. Position 888–895 (888–895 (GISGAGKT)) interacts with ATP. The ABC transmembrane type-2 2 domain occupies 1168–1382 (IQCLACLWKQ…TINGLVTSQF (215 aa)). 7 helical membrane passes run 1188–1208 (IAVN…MFWG), 1219–1236 (LLSA…LGVQ), 1271–1291 (VVVE…IVYS), 1302–1322 (FFWY…YGMM), 1332–1352 (MSSI…GFLI), 1357–1377 (IPIW…INGL), and 1410–1430 (LWVA…LFGF).

The protein belongs to the ABC transporter superfamily. ABCG family. PDR (TC 3.A.1.205) subfamily.

It localises to the membrane. Functionally, may be a general defense protein. This chain is ABC transporter G family member 46, found in Oryza sativa subsp. japonica (Rice).